A 335-amino-acid chain; its full sequence is Endo-1,4-beta-xylanase S20 (335 aa).

Positions 1-22 (MLRKLVTGALAAALLLSGQSNA) are cleaved as a signal peptide. The GH11 domain occupies 39-241 (NNKNETGNGN…GSGYVDFTYA (203 aa)). Residues N42 and N78 are each glycosylated (N-linked (GlcNAc...) asparagine). The active-site Nucleophile is E134. An N-linked (GlcNAc...) asparagine glycan is attached at N202. Catalysis depends on E228, which acts as the Proton donor. An N-linked (GlcNAc...) asparagine glycan is attached at N251. Positions 251 to 291 (NASAPSNNNNNNNNNNDNNGNWNNWNNNNNNNNNNNNNNNN) are disordered. Low complexity predominate over residues 257–291 (NNNNNNNNNNDNNGNWNNWNNNNNNNNNNNNNNNN). Residues 300–335 (NCAAIWGQCGGSGYNGPKCCKQGSCKQINQWYSQCQ) form the CBM1 domain.

Belongs to the glycosyl hydrolase 11 (cellulase G) family.

It localises to the secreted. It catalyses the reaction Endohydrolysis of (1-&gt;4)-beta-D-xylosidic linkages in xylans.. Its pathway is glycan degradation; xylan degradation. Functionally, endo-1,4-beta-xylanase involved in the hydrolysis of xylan, a major structural heterogeneous polysaccharide found in plant biomass representing the second most abundant polysaccharide in the biosphere, after cellulose. The protein is Endo-1,4-beta-xylanase S20 (xynS20) of Neocallimastix patriciarum (Rumen fungus).